Here is a 276-residue protein sequence, read N- to C-terminus: Formamidopyrimidine-DNA glycosylase (276 aa).

The active-site Schiff-base intermediate with DNA is Pro2. Glu3 serves as the catalytic Proton donor. Lys58 acts as the Proton donor; for beta-elimination activity in catalysis. DNA is bound by residues His94, Arg112, and Arg157. Residues 242 to 276 (FVYDRAGLPCRVCGTPIKQIVQGQRSTYFCPTCQR) form an FPG-type zinc finger. Arg266 acts as the Proton donor; for delta-elimination activity in catalysis.

Belongs to the FPG family. As to quaternary structure, monomer. Requires Zn(2+) as cofactor.

The catalysed reaction is Hydrolysis of DNA containing ring-opened 7-methylguanine residues, releasing 2,6-diamino-4-hydroxy-5-(N-methyl)formamidopyrimidine.. It catalyses the reaction 2'-deoxyribonucleotide-(2'-deoxyribose 5'-phosphate)-2'-deoxyribonucleotide-DNA = a 3'-end 2'-deoxyribonucleotide-(2,3-dehydro-2,3-deoxyribose 5'-phosphate)-DNA + a 5'-end 5'-phospho-2'-deoxyribonucleoside-DNA + H(+). Involved in base excision repair of DNA damaged by oxidation or by mutagenic agents. Acts as a DNA glycosylase that recognizes and removes damaged bases. Has a preference for oxidized purines, such as 7,8-dihydro-8-oxoguanine (8-oxoG). Has AP (apurinic/apyrimidinic) lyase activity and introduces nicks in the DNA strand. Cleaves the DNA backbone by beta-delta elimination to generate a single-strand break at the site of the removed base with both 3'- and 5'-phosphates. The sequence is that of Formamidopyrimidine-DNA glycosylase from Paraburkholderia xenovorans (strain LB400).